The following is a 95-amino-acid chain: Putative septation protein SpoVG (95 aa).

It belongs to the SpoVG family.

Its function is as follows. Could be involved in septation. This chain is Putative septation protein SpoVG, found in Clostridium botulinum (strain ATCC 19397 / Type A).